The sequence spans 934 residues: Rab GTPase-activating protein tbc-11 (934 aa).

Positions 16–134 constitute a PID domain; sequence VQYLGCSQLV…SKAETAAKAL (119 aa). The interval 337–383 is disordered; the sequence is FISLESDSDRKRSKQNLGKSPSRMPTQLLHPTGDDESDCDEPLLSGS. Positions 351-361 are enriched in polar residues; the sequence is QNLGKSPSRMP. The region spanning 422–612 is the Rab-GAP TBC domain; that stretch reads GIPDKLRGRV…FILDLFLSQG (191 aa). Coiled-coil stretches lie at residues 727–800 and 861–895; these read KIEL…YKKL and LEEREDHIKNLEIDLAQTKLSLVEAECRNQDLTHQ.

Rab GTPase activating protein for the small GTPases rab-6.1 and rab-6.2. Probably acts through rab-6.1 and rab-6.2 to play a role in microRNA-mediated gene silencing in different tissue types. Required for seam cell division and alae formation. The protein is Rab GTPase-activating protein tbc-11 of Caenorhabditis elegans.